We begin with the raw amino-acid sequence, 469 residues long: 3-isopropylmalate dehydratase large subunit (469 aa).

[4Fe-4S] cluster-binding residues include C347, C407, and C410.

Belongs to the aconitase/IPM isomerase family. LeuC type 1 subfamily. Heterodimer of LeuC and LeuD. Requires [4Fe-4S] cluster as cofactor.

The enzyme catalyses (2R,3S)-3-isopropylmalate = (2S)-2-isopropylmalate. It functions in the pathway amino-acid biosynthesis; L-leucine biosynthesis; L-leucine from 3-methyl-2-oxobutanoate: step 2/4. Catalyzes the isomerization between 2-isopropylmalate and 3-isopropylmalate, via the formation of 2-isopropylmaleate. The chain is 3-isopropylmalate dehydratase large subunit from Proteus mirabilis (strain HI4320).